A 282-amino-acid polypeptide reads, in one-letter code: NAD-dependent protein deacetylase 1 (282 aa).

The Deacetylase sirtuin-type domain occupies 1 to 282 (MTVGRAESPE…ADELSPLPTH (282 aa)). NAD(+)-binding positions include 25–45 (GAGI…SPPS) and 101–104 (QNVD). Histidine 119 functions as the Proton acceptor in the catalytic mechanism. Positions 127, 130, 181, and 184 each coordinate Zn(2+). Residues 221–223 (GSS), 247–249 (NRG), and cysteine 265 contribute to the NAD(+) site.

This sequence belongs to the sirtuin family. Class II subfamily. Zn(2+) serves as cofactor.

It localises to the cytoplasm. The enzyme catalyses N(6)-acetyl-L-lysyl-[protein] + NAD(+) + H2O = 2''-O-acetyl-ADP-D-ribose + nicotinamide + L-lysyl-[protein]. In terms of biological role, NAD-dependent protein deacetylase which modulates the activities of several enzymes which are inactive in their acetylated form. The sequence is that of NAD-dependent protein deacetylase 1 from Mycobacterium avium (strain 104).